The sequence spans 250 residues: Aquaporin TIP2-2 (250 aa).

The next 2 helical transmembrane spans lie at 22 to 42 (VAEF…AIAF) and 54 to 74 (AGLV…VSVA). The NPA 1 signature appears at 83-85 (NPA). The next 3 helical transmembrane spans lie at 97 to 119 (TVLT…CLLL), 142 to 162 (GVVF…ATAA), and 169 to 189 (LGTI…LAAG). The NPA 2 signature appears at 197–199 (NPA). A helical membrane pass occupies residues 218 to 238 (WVGPLIGGGLAGLVYGDVFIG).

It belongs to the MIP/aquaporin (TC 1.A.8) family. TIP (TC 1.A.8.10) subfamily.

The protein resides in the vacuole membrane. In terms of biological role, aquaporins facilitate the transport of water and small neutral solutes across cell membranes. This chain is Aquaporin TIP2-2 (TIP2-2), found in Zea mays (Maize).